Reading from the N-terminus, the 93-residue chain is uncharacterized protein (93 aa).

A TRAM domain is found at 24–85; it reads QLQVGDTLKL…IQTQVGRLFF (62 aa).

It belongs to the ycf81 family.

This is an uncharacterized protein from Thermus thermophilus.